The primary structure comprises 433 residues: MSDVLFIEGGRVIDPASGVDGVRTVVIRDGKVAEVAERVERPRDARAVDARNRWVTPGFVDLHVHLREPGQEYKETVATGARAAVAGGFTAVCAMPNTKPVNDCAAVTELVLARAAAAGLARVYPVGAISRGSNGEELAEYGELKASGCVALSDDGRPVMSSALMRRALEYARAFGLPLTVHEEDLHLVGKGVMHEGAAATRLGLKGIPSQAEDVMVLRDIALVELTGGRLHVAHVSTAGAVRAIREAKRRGLPVTGEVTPHHLALTDDDVGASGYSTDFKMNPPLRSAEDVRACREALADGTLDAIATDHAPHSAVEKDVEFDAAANGIVGLETAFSVCLGLVREGALTERRLVEALTVGPARVFGLPAGTLARGAAADVAVLDAAAEWTVDPARLHSKGRNTPWKGRRLAGRCTHTIVGGRIVHEEDKADR.

Zn(2+)-binding residues include His63 and His65. Substrate is bound by residues His65–Arg67 and Asn97. Asp155, His182, and His235 together coordinate Zn(2+). Asn283 contacts substrate. Asp310 contributes to the Zn(2+) binding site. Asp310 is a catalytic residue. A substrate-binding site is contributed by His314.

It belongs to the metallo-dependent hydrolases superfamily. DHOase family. Class I DHOase subfamily. Requires Zn(2+) as cofactor.

The enzyme catalyses (S)-dihydroorotate + H2O = N-carbamoyl-L-aspartate + H(+). It functions in the pathway pyrimidine metabolism; UMP biosynthesis via de novo pathway; (S)-dihydroorotate from bicarbonate: step 3/3. Functionally, catalyzes the reversible cyclization of carbamoyl aspartate to dihydroorotate. The chain is Dihydroorotase from Anaeromyxobacter dehalogenans (strain 2CP-1 / ATCC BAA-258).